A 405-amino-acid polypeptide reads, in one-letter code: Amino acid transporter AVT1I (405 aa).

The next 11 membrane-spanning stretches (helical) occupy residues 22–42 (CFNALNALSGIGILSVPYSLA), 46–66 (WLSLSLLLLLAVTAFYTSLLI), 93–113 (IIVSVFMHLELYLVTTGFLIL), 140–160 (FMATVAFVIMPTLWWDNLSVL), 169–189 (LATTVTLGSISWIGAFDGIGF), 201–221 (IPTALSLYAFCYGAHPVLPTL), 234–254 (VLLICFILCTIGYTSMAVLGY), 278–298 (VAIYTTLVNPVAKYALMITPT), 318–338 (LLISTFFIISSVVIAETLPFF), 343–363 (SLVGALLSVTVSILLPCLCYL), and 377–397 (IMLFGMVVMSVFVGVIGTYIA).

This sequence belongs to the amino acid/polyamine transporter 2 family. Amino acid/auxin permease (AAAP) (TC 2.A.18.5) subfamily.

Its subcellular location is the membrane. This chain is Amino acid transporter AVT1I, found in Arabidopsis thaliana (Mouse-ear cress).